Here is a 214-residue protein sequence, read N- to C-terminus: Somatotropin-A (214 aa).

The first 25 residues, 1–25 (MATGFCSSFGLLVVLLLKNVADVGA), serve as a signal peptide directing secretion. Cystine bridges form between Cys77/Cys187 and Cys204/Cys212.

It belongs to the somatotropin/prolactin family.

The protein localises to the secreted. In terms of biological role, growth hormone plays an important role in growth control. The protein is Somatotropin-A (gh-a) of Xenopus laevis (African clawed frog).